The chain runs to 108 residues: uncharacterized protein (108 aa).

A helical membrane pass occupies residues 64–84 (LFIIYYYYYLLICLSPHFFPI).

The protein localises to the membrane. This is an uncharacterized protein from Schizosaccharomyces pombe (strain 972 / ATCC 24843) (Fission yeast).